A 156-amino-acid polypeptide reads, in one-letter code: Small ribosomal subunit protein uS7 (156 aa).

The protein belongs to the universal ribosomal protein uS7 family. In terms of assembly, part of the 30S ribosomal subunit. Contacts proteins S9 and S11.

In terms of biological role, one of the primary rRNA binding proteins, it binds directly to 16S rRNA where it nucleates assembly of the head domain of the 30S subunit. Is located at the subunit interface close to the decoding center, probably blocks exit of the E-site tRNA. The chain is Small ribosomal subunit protein uS7 from Syntrophomonas wolfei subsp. wolfei (strain DSM 2245B / Goettingen).